Consider the following 232-residue polypeptide: Zinc import ATP-binding protein ZnuC (232 aa).

Residues valine 5–tyrosine 220 enclose the ABC transporter domain. Glycine 37–serine 44 is an ATP binding site.

Belongs to the ABC transporter superfamily. Zinc importer (TC 3.A.1.15.5) family. The complex is composed of two ATP-binding proteins (ZnuC), two transmembrane proteins (ZnuB) and a solute-binding protein (ZnuA).

It localises to the cell membrane. The catalysed reaction is Zn(2+)(out) + ATP(in) + H2O(in) = Zn(2+)(in) + ADP(in) + phosphate(in) + H(+)(in). Its function is as follows. Part of the ABC transporter complex ZnuABC involved in zinc import. Responsible for energy coupling to the transport system. This Wigglesworthia glossinidia brevipalpis protein is Zinc import ATP-binding protein ZnuC.